The sequence spans 170 residues: MNGFSHFNEQGRAQMVDISEKSSTVRTAAAVSSVHMKNEVYEKIQSHDIGKGDVLAVAQVAGIMAAKQTSNIIPMCHPLSLSGVDISFDWKIKEAEVILHIKAQVKTKGSTGVEMEALTSASVCALTVYDMCKALDKGMVIGPTFLLEKTGGKNGDFKRELSEYNLEDQK.

Substrate-binding positions include 75-77 and 115-116; these read MCH and ME. Aspartate 130 is a catalytic residue.

This sequence belongs to the MoaC family. In terms of assembly, homohexamer; trimer of dimers.

It carries out the reaction (8S)-3',8-cyclo-7,8-dihydroguanosine 5'-triphosphate = cyclic pyranopterin phosphate + diphosphate. Its pathway is cofactor biosynthesis; molybdopterin biosynthesis. Its function is as follows. Catalyzes the conversion of (8S)-3',8-cyclo-7,8-dihydroguanosine 5'-triphosphate to cyclic pyranopterin monophosphate (cPMP). This chain is Cyclic pyranopterin monophosphate synthase, found in Bacillus subtilis (strain 168).